The sequence spans 267 residues: Translation initiation factor 2 subunit alpha (267 aa).

The region spanning 12–83 is the S1 motif domain; the sequence is GEIVMATVER…KRKYANLSLR (72 aa).

Belongs to the eIF-2-alpha family. In terms of assembly, heterotrimer composed of an alpha, a beta and a gamma chain.

EIF-2 functions in the early steps of protein synthesis by forming a ternary complex with GTP and initiator tRNA. The polypeptide is Translation initiation factor 2 subunit alpha (Methanopyrus kandleri (strain AV19 / DSM 6324 / JCM 9639 / NBRC 100938)).